The primary structure comprises 274 residues: Putative ABC transporter ATP-binding protein alr3946 (274 aa).

The 237-residue stretch at 6–242 (LTFEQVYYTY…REILDSIELG (237 aa)) folds into the ABC transporter domain. 40 to 47 (GRNGCGKT) contributes to the ATP binding site.

It belongs to the ABC transporter superfamily.

It localises to the cell inner membrane. In terms of biological role, probably part of an ABC transporter complex. Responsible for energy coupling to the transport system. The polypeptide is Putative ABC transporter ATP-binding protein alr3946 (Nostoc sp. (strain PCC 7120 / SAG 25.82 / UTEX 2576)).